The following is a 216-amino-acid chain: Probable GTP-binding protein EngB (216 aa).

One can recognise an EngB-type G domain in the interval 27–201 (EGIEVAFAGR…REKLDTWFSE (175 aa)). GTP is bound by residues 35–42 (GRSNAGKS), 62–66 (GRTQL), 80–83 (DLPG), 147–150 (TKAD), and 180–182 (FSS). 2 residues coordinate Mg(2+): Ser-42 and Thr-64.

The protein belongs to the TRAFAC class TrmE-Era-EngA-EngB-Septin-like GTPase superfamily. EngB GTPase family. It depends on Mg(2+) as a cofactor.

Necessary for normal cell division and for the maintenance of normal septation. In Yersinia pestis bv. Antiqua (strain Angola), this protein is Probable GTP-binding protein EngB.